We begin with the raw amino-acid sequence, 506 residues long: Maturase K (506 aa).

The protein belongs to the intron maturase 2 family. MatK subfamily.

It localises to the plastid. The protein localises to the chloroplast. Functionally, usually encoded in the trnK tRNA gene intron. Probably assists in splicing its own and other chloroplast group II introns. The polypeptide is Maturase K (Empetrum nigrum (Black crowberry)).